The following is a 122-amino-acid chain: Large ribosomal subunit protein bL12 (122 aa).

It belongs to the bacterial ribosomal protein bL12 family. Homodimer. Part of the ribosomal stalk of the 50S ribosomal subunit. Forms a multimeric L10(L12)X complex, where L10 forms an elongated spine to which 2 to 4 L12 dimers bind in a sequential fashion. Binds GTP-bound translation factors.

Its function is as follows. Forms part of the ribosomal stalk which helps the ribosome interact with GTP-bound translation factors. Is thus essential for accurate translation. This Vibrio vulnificus (strain CMCP6) protein is Large ribosomal subunit protein bL12.